The following is a 210-amino-acid chain: Large ribosomal subunit protein uL4 (210 aa).

Residues 41 to 51 are compositionally biased toward polar residues; that stretch reads QNNARQGNASA. Positions 41 to 77 are disordered; sequence QNNARQGNASAKTRAEVRGGGRKPWKQKGTGRARAGS. The span at 60–71 shows a compositional bias: basic residues; sequence GGRKPWKQKGTG.

The protein belongs to the universal ribosomal protein uL4 family. In terms of assembly, part of the 50S ribosomal subunit.

One of the primary rRNA binding proteins, this protein initially binds near the 5'-end of the 23S rRNA. It is important during the early stages of 50S assembly. It makes multiple contacts with different domains of the 23S rRNA in the assembled 50S subunit and ribosome. In terms of biological role, forms part of the polypeptide exit tunnel. This chain is Large ribosomal subunit protein uL4, found in Synechocystis sp. (strain ATCC 27184 / PCC 6803 / Kazusa).